The sequence spans 396 residues: Elongation factor Tu (396 aa).

Positions 10-206 (KPHCNIGTIG…AVDSYIPQPE (197 aa)) constitute a tr-type G domain. A G1 region spans residues 19–26 (GHVDHGKT). 19 to 26 (GHVDHGKT) is a binding site for GTP. Thr26 serves as a coordination point for Mg(2+). Residues 60–64 (GITIS) form a G2 region. The segment at 81-84 (DCPG) is G3. GTP is bound by residues 81–85 (DCPGH) and 136–139 (NKCD). The G4 stretch occupies residues 136 to 139 (NKCD). The G5 stretch occupies residues 174–176 (SAL).

This sequence belongs to the TRAFAC class translation factor GTPase superfamily. Classic translation factor GTPase family. EF-Tu/EF-1A subfamily. In terms of assembly, monomer.

Its subcellular location is the cytoplasm. It catalyses the reaction GTP + H2O = GDP + phosphate + H(+). In terms of biological role, GTP hydrolase that promotes the GTP-dependent binding of aminoacyl-tRNA to the A-site of ribosomes during protein biosynthesis. The polypeptide is Elongation factor Tu (Rhodopseudomonas palustris (strain BisA53)).